We begin with the raw amino-acid sequence, 598 residues long: Nitrate/nitrite sensor protein NarX (598 aa).

The Cytoplasmic segment spans residues 1–14 (MLKRCLSPLTLVNQ). A helical membrane pass occupies residues 15–37 (VALIVLLSTAIGLAGMAVSGWLV). Over 38 to 151 (QGVQGSAHAI…DRTTEMRIET (114 aa)) the chain is Periplasmic. The chain crosses the membrane as a helical span at residues 152–174 (VVLVHRVMAVFMALLLVFTIIWL). The Cytoplasmic segment spans residues 175-598 (RARLLQPWRQ…FTDVQGDTHE (424 aa)). In terms of domain architecture, HAMP spans 176–228 (ARLLQPWRQLLAMASAVSHRDFTQRANISGRNEMAMLGTALNNMSAELAESYA). The 195-residue stretch at 393–587 (TIARELHDSI…EVVVTFIPEK (195 aa)) folds into the Histidine kinase domain. Phosphohistidine; by autocatalysis is present on histidine 399.

The protein localises to the cell inner membrane. The catalysed reaction is ATP + protein L-histidine = ADP + protein N-phospho-L-histidine.. Its function is as follows. Acts as a sensor for nitrate/nitrite and transduces signal of nitrate availability to the NarL protein and of both nitrate/nitrite to the NarP protein. NarX probably activates NarL and NarP by phosphorylation in the presence of nitrate. NarX also plays a negative role in controlling NarL activity, probably through dephosphorylation in the absence of nitrate. In Escherichia coli O157:H7, this protein is Nitrate/nitrite sensor protein NarX (narX).